We begin with the raw amino-acid sequence, 84 residues long: Putative membrane protein insertion efficiency factor (84 aa).

The tract at residues 60 to 84 is disordered; the sequence is WSQPGEDPVPDHFSLKRNDTRKQSH. Residues 68–84 are compositionally biased toward basic and acidic residues; the sequence is VPDHFSLKRNDTRKQSH.

The protein belongs to the UPF0161 family.

Its subcellular location is the cell membrane. Could be involved in insertion of integral membrane proteins into the membrane. This is Putative membrane protein insertion efficiency factor from Streptococcus gordonii (strain Challis / ATCC 35105 / BCRC 15272 / CH1 / DL1 / V288).